Here is a 435-residue protein sequence, read N- to C-terminus: NAD-specific glutamate dehydrogenase A (435 aa).

A disordered region spans residues M1–L28. The segment covering S14–E23 has biased composition (acidic residues). Residue K126 is part of the active site.

This sequence belongs to the Glu/Leu/Phe/Val dehydrogenases family. In terms of assembly, homohexamer. The N-terminus is blocked.

The enzyme catalyses L-glutamate + NAD(+) + H2O = 2-oxoglutarate + NH4(+) + NADH + H(+). Its activity is regulated as follows. Inhibited by ethanol, acetone, acetonitrile and 2-propanol (65 to 70% inhibition) and to a lesser extent by methanol and dimethyl formamide (26 and 49 % inhibition respectively). No effect of glycerol or DMSO. This Halobacterium salinarum (Halobacterium halobium) protein is NAD-specific glutamate dehydrogenase A (gdhX).